A 245-amino-acid chain; its full sequence is 1-(5-phosphoribosyl)-5-[(5-phosphoribosylamino)methylideneamino] imidazole-4-carboxamide isomerase (245 aa).

Catalysis depends on Asp8, which acts as the Proton acceptor. Asp129 serves as the catalytic Proton donor.

This sequence belongs to the HisA/HisF family.

The protein localises to the cytoplasm. It catalyses the reaction 1-(5-phospho-beta-D-ribosyl)-5-[(5-phospho-beta-D-ribosylamino)methylideneamino]imidazole-4-carboxamide = 5-[(5-phospho-1-deoxy-D-ribulos-1-ylimino)methylamino]-1-(5-phospho-beta-D-ribosyl)imidazole-4-carboxamide. It functions in the pathway amino-acid biosynthesis; L-histidine biosynthesis; L-histidine from 5-phospho-alpha-D-ribose 1-diphosphate: step 4/9. This Rhodopseudomonas palustris (strain BisA53) protein is 1-(5-phosphoribosyl)-5-[(5-phosphoribosylamino)methylideneamino] imidazole-4-carboxamide isomerase.